We begin with the raw amino-acid sequence, 389 residues long: Curcumin synthase 1 (389 aa).

The active site involves Cys-164.

This sequence belongs to the thiolase-like superfamily. Chalcone/stilbene synthases family. In terms of assembly, homodimer. In terms of tissue distribution, expressed in both the leaf and rhizome, with higher expression in the rhizome.

The catalysed reaction is (E)-feruloylacetyl-CoA + (E)-feruloyl-CoA + H2O = curcumin + CO2 + 2 CoA. It functions in the pathway secondary metabolite biosynthesis; flavonoid biosynthesis. Catalyzes the synthesis of curcumin by condensing feruloyl-CoA with a diketide-CoA in the curcuminoid biosynthesis. The sequence is that of Curcumin synthase 1 (CURS1) from Curcuma longa (Turmeric).